Here is a 325-residue protein sequence, read N- to C-terminus: Elongation factor Ts, mitochondrial (325 aa).

The transit peptide at methionine 1 to serine 45 directs the protein to the mitochondrion. 3 positions are modified to N6-succinyllysine: lysine 76, lysine 133, and lysine 192. Serine 270 carries the phosphoserine modification. At threonine 324 the chain carries Phosphothreonine.

The protein belongs to the EF-Ts family. In terms of tissue distribution, expressed in all tissues, with the highest levels of expression in skeletal muscle, liver and kidney.

The protein resides in the mitochondrion. Its function is as follows. Associates with the EF-Tu.GDP complex and induces the exchange of GDP to GTP. It remains bound to the aminoacyl-tRNA.EF-Tu.GTP complex up to the GTP hydrolysis stage on the ribosome. This chain is Elongation factor Ts, mitochondrial, found in Homo sapiens (Human).